Here is a 209-residue protein sequence, read N- to C-terminus: Thymidylate kinase (209 aa).

Residue 10–17 participates in ATP binding; sequence GLEGAGKS.

This sequence belongs to the thymidylate kinase family.

The catalysed reaction is dTMP + ATP = dTDP + ADP. Functionally, phosphorylation of dTMP to form dTDP in both de novo and salvage pathways of dTTP synthesis. In Photobacterium profundum (strain SS9), this protein is Thymidylate kinase.